Consider the following 54-residue polypeptide: Phorbol-12-myristate-13-acetate-induced protein 1 (54 aa).

Residues Leu-29 to Asn-37 carry the BH3 motif. The tract at residues Lys-41–Phe-50 is required for mitochondrial location.

This sequence belongs to the PMAIP1 family. As to quaternary structure, interacts with MCL1. Interacts with BCL2A1. Interacts with BAX. Interacts with BCL2L10. As to expression, highly expressed in adult T-cell leukemia cell line.

It is found in the mitochondrion. Promotes activation of caspases and apoptosis. Promotes mitochondrial membrane changes and efflux of apoptogenic proteins from the mitochondria. Contributes to p53/TP53-dependent apoptosis after radiation exposure. Promotes proteasomal degradation of MCL1. Competes with BAK1 for binding to MCL1 and can displace BAK1 from its binding site on MCL1. Competes with BIM/BCL2L11 for binding to MCL1 and can displace BIM/BCL2L11 from its binding site on MCL1. The chain is Phorbol-12-myristate-13-acetate-induced protein 1 (PMAIP1) from Homo sapiens (Human).